The sequence spans 251 residues: Probable ATP-dependent transporter ycf16 (251 aa).

Residues 8–250 (LEIKNLKACI…ELESKGYEWL (243 aa)) enclose the ABC transporter domain. Residue 40-47 (GPNGSGKS) participates in ATP binding.

This sequence belongs to the ABC transporter superfamily. Ycf16 family.

The protein localises to the plastid. It localises to the chloroplast. The protein is Probable ATP-dependent transporter ycf16 (ycf16) of Trieres chinensis (Marine centric diatom).